A 73-amino-acid chain; its full sequence is Sodium channel neurotoxin MeuNaTxalpha-13 (73 aa).

Positions 1–5 (TGVES) are cleaved as a signal peptide. The LCN-type CS-alpha/beta domain occupies 7 to 71 (RDAYIAKPHN…VPIRIPGKCH (65 aa)). 4 disulfides stabilise this stretch: C17–C70, C21–C43, C29–C53, and C33–C55. Residues 72 to 73 (RR) constitute a propeptide, removed by a carboxypeptidase.

Belongs to the long (4 C-C) scorpion toxin superfamily. Sodium channel inhibitor family. Alpha subfamily. As to expression, expressed by the venom gland.

Its subcellular location is the secreted. Its function is as follows. Alpha toxins bind voltage-independently at site-3 of sodium channels (Nav) and inhibit the inactivation of the activated channels, thereby blocking neuronal transmission. The polypeptide is Sodium channel neurotoxin MeuNaTxalpha-13 (Mesobuthus eupeus (Lesser Asian scorpion)).